Here is a 614-residue protein sequence, read N- to C-terminus: 1-deoxy-D-xylulose-5-phosphate synthase (614 aa).

Thiamine diphosphate is bound by residues histidine 74 and alanine 115–serine 117. Aspartate 146 is a Mg(2+) binding site. Thiamine diphosphate-binding positions include glycine 147–alanine 148, asparagine 175, tyrosine 282, and glutamate 363. Asparagine 175 contributes to the Mg(2+) binding site.

This sequence belongs to the transketolase family. DXPS subfamily. Homodimer. Mg(2+) serves as cofactor. It depends on thiamine diphosphate as a cofactor.

The enzyme catalyses D-glyceraldehyde 3-phosphate + pyruvate + H(+) = 1-deoxy-D-xylulose 5-phosphate + CO2. It participates in metabolic intermediate biosynthesis; 1-deoxy-D-xylulose 5-phosphate biosynthesis; 1-deoxy-D-xylulose 5-phosphate from D-glyceraldehyde 3-phosphate and pyruvate: step 1/1. In terms of biological role, catalyzes the acyloin condensation reaction between C atoms 2 and 3 of pyruvate and glyceraldehyde 3-phosphate to yield 1-deoxy-D-xylulose-5-phosphate (DXP). The chain is 1-deoxy-D-xylulose-5-phosphate synthase from Nitrosomonas eutropha (strain DSM 101675 / C91 / Nm57).